The primary structure comprises 367 residues: UDP-N-acetylglucosamine--N-acetylmuramyl-(pentapeptide) pyrophosphoryl-undecaprenol N-acetylglucosamine transferase (367 aa).

UDP-N-acetyl-alpha-D-glucosamine is bound by residues threonine 13–glycine 15, arginine 168, serine 196, isoleucine 252, and glutamine 297.

This sequence belongs to the glycosyltransferase 28 family. MurG subfamily.

The protein localises to the cell inner membrane. It carries out the reaction di-trans,octa-cis-undecaprenyl diphospho-N-acetyl-alpha-D-muramoyl-L-alanyl-D-glutamyl-meso-2,6-diaminopimeloyl-D-alanyl-D-alanine + UDP-N-acetyl-alpha-D-glucosamine = di-trans,octa-cis-undecaprenyl diphospho-[N-acetyl-alpha-D-glucosaminyl-(1-&gt;4)]-N-acetyl-alpha-D-muramoyl-L-alanyl-D-glutamyl-meso-2,6-diaminopimeloyl-D-alanyl-D-alanine + UDP + H(+). The protein operates within cell wall biogenesis; peptidoglycan biosynthesis. Its function is as follows. Cell wall formation. Catalyzes the transfer of a GlcNAc subunit on undecaprenyl-pyrophosphoryl-MurNAc-pentapeptide (lipid intermediate I) to form undecaprenyl-pyrophosphoryl-MurNAc-(pentapeptide)GlcNAc (lipid intermediate II). This chain is UDP-N-acetylglucosamine--N-acetylmuramyl-(pentapeptide) pyrophosphoryl-undecaprenol N-acetylglucosamine transferase, found in Methylibium petroleiphilum (strain ATCC BAA-1232 / LMG 22953 / PM1).